Here is a 336-residue protein sequence, read N- to C-terminus: MVVDSSALNVENDWKPERTLVLLGRTGNGKSATGNSILGKTMFQSKARGKFITKECKLHKSKLPNGLTINVIDTPGLFSASSTTDFTIREIVRCLLLAKGGIDAVLLVFSLRNRLTEEEQSTLRTLKILFGSQIVDYIIVVFTNEDALECGETLDDYLEDCPEFQEILEECDDRKVLFDNSYNAPVSKKDRQVHDLLNLVEQISKKNNGKSYMADLSHELRENEATIKEKQKQIEEMKGWSSKQEISQMKKELEKSHNEMLEGIKEKISNQLKESLEDVKEQLAKAQAEREETEKKMNEIQKLSSDEIRRLREQLNKAEKETASLRTELNKKCTVL.

Residues 15 to 221 form the AIG1-type G domain; that stretch reads KPERTLVLLG…YMADLSHELR (207 aa). Positions 24–31 are G1; it reads GRTGNGKS. Residues 24–32 and S45 each bind GTP; that span reads GRTGNGKSA. The interval 51-55 is G2; sequence FITKE. The interval 73-76 is G3; sequence DTPG. Positions 143 to 146 are G4; sequence TNED. Residues 179 to 181 are G5; that stretch reads DNS. N180 contacts GTP. Residues 265-328 are a coiled coil; sequence KEKISNQLKE…EKETASLRTE (64 aa).

Belongs to the TRAFAC class TrmE-Era-EngA-EngB-Septin-like GTPase superfamily. AIG1/Toc34/Toc159-like paraseptin GTPase family. IAN subfamily. Expressed in pollen grains.

The protein is Immune-associated nucleotide-binding protein 13 of Arabidopsis thaliana (Mouse-ear cress).